The chain runs to 295 residues: Shikimate dehydrogenase (NADP(+)) (295 aa).

Shikimate-binding positions include 21 to 23 (SLS) and T68. The active-site Proton acceptor is K72. N93 and D108 together coordinate shikimate. NADP(+) is bound by residues 132–136 (GAGGA), 156–161 (NRTPER), and L228. Shikimate is bound at residue Y230. Residue G251 coordinates NADP(+).

It belongs to the shikimate dehydrogenase family. In terms of assembly, homodimer.

The catalysed reaction is shikimate + NADP(+) = 3-dehydroshikimate + NADPH + H(+). It participates in metabolic intermediate biosynthesis; chorismate biosynthesis; chorismate from D-erythrose 4-phosphate and phosphoenolpyruvate: step 4/7. Involved in the biosynthesis of the chorismate, which leads to the biosynthesis of aromatic amino acids. Catalyzes the reversible NADPH linked reduction of 3-dehydroshikimate (DHSA) to yield shikimate (SA). The sequence is that of Shikimate dehydrogenase (NADP(+)) from Moorella thermoacetica (strain ATCC 39073 / JCM 9320).